Consider the following 447-residue polypeptide: Ribosomal protein uS12 methylthiotransferase RimO (447 aa).

The region spanning 4 to 114 is the MTTase N-terminal domain; that stretch reads PKVGFVSLGC…VMEAVHEYVP (111 aa). [4Fe-4S] cluster is bound by residues Cys13, Cys49, Cys78, Cys147, Cys151, and Cys154. The Radical SAM core domain maps to 133 to 370; that stretch reads LTPKHYAYLK…MQVQQEISAA (238 aa). A TRAM domain is found at 373–443; it reads QKRIGQTMTV…EYDLFAKLIQ (71 aa).

It belongs to the methylthiotransferase family. RimO subfamily. It depends on [4Fe-4S] cluster as a cofactor.

The protein localises to the cytoplasm. It carries out the reaction L-aspartate(89)-[ribosomal protein uS12]-hydrogen + (sulfur carrier)-SH + AH2 + 2 S-adenosyl-L-methionine = 3-methylsulfanyl-L-aspartate(89)-[ribosomal protein uS12]-hydrogen + (sulfur carrier)-H + 5'-deoxyadenosine + L-methionine + A + S-adenosyl-L-homocysteine + 2 H(+). Catalyzes the methylthiolation of an aspartic acid residue of ribosomal protein uS12. The chain is Ribosomal protein uS12 methylthiotransferase RimO from Acinetobacter baylyi (strain ATCC 33305 / BD413 / ADP1).